A 180-amino-acid chain; its full sequence is Bifunctional protein PyrR (180 aa).

The PRPP-binding motif lies at 99-111; sequence VILVDDVLYTCRT.

Belongs to the purine/pyrimidine phosphoribosyltransferase family. PyrR subfamily. In terms of assembly, homodimer and homohexamer; in equilibrium.

The catalysed reaction is UMP + diphosphate = 5-phospho-alpha-D-ribose 1-diphosphate + uracil. Functionally, regulates transcriptional attenuation of the pyrimidine nucleotide (pyr) operon by binding in a uridine-dependent manner to specific sites on pyr mRNA. This disrupts an antiterminator hairpin in the RNA and favors formation of a downstream transcription terminator, leading to a reduced expression of downstream genes. Also displays a weak uracil phosphoribosyltransferase activity which is not physiologically significant. The polypeptide is Bifunctional protein PyrR (Clostridium botulinum (strain Eklund 17B / Type B)).